A 123-amino-acid chain; its full sequence is Fluoride-specific ion channel FluC (123 aa).

A run of 4 helical transmembrane segments spans residues isoleucine 3–alanine 23, tryptophan 34–phenylalanine 54, leucine 67–leucine 87, and leucine 99–valine 119. Na(+) contacts are provided by glycine 74 and threonine 77.

This sequence belongs to the fluoride channel Fluc/FEX (TC 1.A.43) family.

Its subcellular location is the cell inner membrane. It carries out the reaction fluoride(in) = fluoride(out). Na(+) is not transported, but it plays an essential structural role and its presence is essential for fluoride channel function. In terms of biological role, fluoride-specific ion channel. Important for reducing fluoride concentration in the cell, thus reducing its toxicity. This is Fluoride-specific ion channel FluC from Magnetococcus marinus (strain ATCC BAA-1437 / JCM 17883 / MC-1).